Here is an 86-residue protein sequence, read N- to C-terminus: Weak neurotoxin 9 (86 aa).

Residues 1 to 21 form the signal peptide; that stretch reads MKTLLLTLVVVTIVCLDLGYT. 5 disulfide bridges follow: Cys24–Cys45, Cys27–Cys32, Cys38–Cys63, Cys67–Cys78, and Cys79–Cys84.

The protein belongs to the three-finger toxin family. Ancestral subfamily. Orphan group II sub-subfamily. In terms of tissue distribution, expressed by the venom gland.

It localises to the secreted. Binds with low affinity to muscular (alpha-1-beta-1-delta-epsilon/CHRNA1-CHRNB1-CHRND-CHRNE) and very low affinity to neuronal (alpha-7/CHRNA7) nicotinic acetylcholine receptor (nAChR). This is Weak neurotoxin 9 from Naja sputatrix (Malayan spitting cobra).